Reading from the N-terminus, the 386-residue chain is Ovalbumin (386 aa).

G2 bears the N-acetylglycine mark. Residues 22 to 48 constitute a signal peptide (not cleaved); the sequence is HHANENIFYSPFTIISALAMVYLGAKD. S69 carries the phosphoserine modification. C74 and C121 form a disulfide bridge. 2 N-linked (GlcNAc...) asparagine glycosylation sites follow: N293 and N312. S345 carries the post-translational modification Phosphoserine. N372 carries an N-linked (GlcNAc...) asparagine glycan.

This sequence belongs to the serpin family. Ov-serpin subfamily. The signal sequence is not cleaved. The functional signal for membrane translocation of ovalbumin becomes accessible when the nascent chain is 50 to 60 residues long. The hydrophobic sequence which lies between residues 27 and 43 folds back on the preceding residues to form an amphipathic hairpin structure which is the signal element recognized by the membrane. Major protein of egg white.

It is found in the secreted. Storage protein of egg white. Lack protease inhibitory activity. This is Ovalbumin (SERPINB14) from Meleagris gallopavo (Wild turkey).